The following is a 445-amino-acid chain: C-type lectin domain family 4 member M (445 aa).

Residues 1-49 are Cytoplasmic-facing; it reads MSDSKEPRVQQLGLLEEDPTTSGIRLFPRDFQFQQIHGHKSSTGCLGHG. Positions 14–15 match the Endocytosis signal motif; sequence LL. A helical; Signal-anchor for type II membrane protein transmembrane segment spans residues 50–70; it reads PLVLQLLSFTLLAGVLVAILV. Topologically, residues 71–445 are extracellular; sequence QVSKVPSSLS…KKPAVCFRDE (375 aa). N92 carries an N-linked (GlcNAc...) asparagine glycan. 9 repeat units span residues 108-130, 131-151, 154-176, 177-199, 200-222, 223-245, 246-268, 269-291, and 292-314. The interval 108-315 is 9 X approximate tandem repeats; the sequence is KLQEIYQELT…AFERLCRHCP (208 aa). 4 cysteine pairs are disulfide-bonded: C311–C441, C314–C325, C342–C435, and C414–C427. One can recognise a C-type lectin domain in the interval 320-436; it reads FFQGNCYFMS…CDIDNYWICK (117 aa). Ca(2+) contacts are provided by E405, N407, S409, E412, N423, and D424. N-linked (GlcNAc...) asparagine glycosylation is present at N407.

In terms of assembly, homotetramer.

The protein localises to the membrane. Its function is as follows. Probable pathogen-recognition receptor involved in peripheral immune surveillance in liver. May mediate the endocytosis of pathogens which are subsequently degraded in lysosomal compartments. Probably recognizes in a calcium-dependent manner high mannose N-linked oligosaccharides in a variety of pathogen antigens. Is a receptor for ICAM3, probably by binding to mannose-like carbohydrates. In Pan troglodytes (Chimpanzee), this protein is C-type lectin domain family 4 member M (CLEC4M).